The sequence spans 473 residues: Spliceosome-associated protein CWC27 homolog (473 aa).

Ser2 bears the N-acetylserine mark. The PPIase cyclophilin-type domain maps to 11-166 (TNGKVLLKTT…NSHKIRSCEV (156 aa)). The span at 178–193 (EIKKPKKEKPEEEVKK) shows a compositional bias: basic and acidic residues. 3 disordered regions span residues 178 to 197 (EIKK…LKPK), 203 to 383 (SLLS…TSRE), and 401 to 473 (IAET…KERR). The stretch at 206–230 (SFGEEAEEEEEEVNRVSQSMKGKSK) forms a coiled coil. Basic and acidic residues predominate over residues 231–241 (SSHDLLKDDPH). Positions 252–254 (RGD) match the Cell attachment site motif. Positions 256–266 (AEDSDDDGEYE) are enriched in acidic residues. Composition is skewed to basic and acidic residues over residues 267-348 (GAEH…KRSE) and 360-372 (EYRR…EALR). The stretch at 311–378 (VSRSEELRKE…EALRKQQAKT (68 aa)) forms a coiled coil. Ser347 carries the phosphoserine modification. Acidic residues predominate over residues 405-419 (PENDISETEVEDDEG). Basic and acidic residues-rich tracts occupy residues 426 to 438 (QFED…KDAS) and 458 to 473 (RREE…KERR).

Belongs to the cyclophilin-type PPIase family. Part of the activated spliceosome B/catalytic step 1 spliceosome, one of the forms of the spliceosome which has a well-formed active site but still cannot catalyze the branching reaction and is composed at least of 52 proteins, the U2, U5 and U6 snRNAs and the pre-mRNA. Recruited during early steps of activated spliceosome B maturation, it is probably one of the first proteins released from this complex as he matures to the spliceosome C complex. Component of the minor spliceosome, which splices U12-type introns.

The protein localises to the nucleus. As part of the spliceosome, plays a role in pre-mRNA splicing. Probable inactive PPIase with no peptidyl-prolyl cis-trans isomerase activity. As a component of the minor spliceosome, involved in the splicing of U12-type introns in pre-mRNAs. The sequence is that of Spliceosome-associated protein CWC27 homolog from Bos taurus (Bovine).